Here is a 306-residue protein sequence, read N- to C-terminus: D-alanine--D-alanine ligase (306 aa).

An ATP-grasp domain is found at 105-300 (KMIWQAAGIS…FDELVIQILE (196 aa)). 131–186 (TDRLGLPLIIKPAREGSTIGLNKVDYAQDMQSAYQTAAQHDSLVIAEQFIQGIELT) is a binding site for ATP. Mg(2+) contacts are provided by D254, E267, and N269.

It belongs to the D-alanine--D-alanine ligase family. Requires Mg(2+) as cofactor. Mn(2+) is required as a cofactor.

It is found in the cytoplasm. The catalysed reaction is 2 D-alanine + ATP = D-alanyl-D-alanine + ADP + phosphate + H(+). It functions in the pathway cell wall biogenesis; peptidoglycan biosynthesis. Functionally, cell wall formation. The chain is D-alanine--D-alanine ligase from Nitrosomonas eutropha (strain DSM 101675 / C91 / Nm57).